A 392-amino-acid chain; its full sequence is Nucleosome assembly protein 1-like 1-A (392 aa).

The interval 1-37 (MANIDNKGQTELDQQDMEDVEDVEEEETGEDANSKAR) is disordered. The segment covering 13-30 (DQQDMEDVEDVEEEETGE) has biased composition (acidic residues). An NAP1L motif motif is present at residues 126–150 (YEPTEEECEWKVEEEDISGDLKEKA). Residues 273-279 (IKKKQKH) carry the Nuclear localization signal motif. Positions 346 to 377 (AIEDDDDDYDEEGEEADDEEGEEEADEDNDPD) are enriched in acidic residues. The segment at 346-392 (AIEDDDDDYDEEGEEADDEEGEEEADEDNDPDYEPKKGQNPAECKQQ) is disordered.

The protein belongs to the nucleosome assembly protein (NAP) family. In terms of assembly, forms homomultimers. Interacts with histone B4. Interacts with the B-type cyclins ccnb1 and ccnb2. Post-translationally, phosphorylated by cyclin B-cdc2 kinase complexes. In terms of tissue distribution, initially expressed throughout the embryo with expression higher at the animal pole. Becomes localized to presumptive ectoderm by gastrula stages. By stage 18 (neurula), expressed in the neural plate and posterior to the cement gland. In late neurula/early tailbud stages, expressed in the neural crest, neural tube, eyes, tailbud and ventral blood islands. Adult expression is predominantly in ovaries.

The protein resides in the cytoplasm. It localises to the nucleus. Its function is as follows. Acts as a chaperone for the linker histone to facilitate deposition of histone B4 onto linker DNA. Required for both remodeling of sperm chromatin into nucleosomes, and linker histone binding to nucleosome core dimers. Plays a role in tissue-specific gene regulation. Required for primitive hemopoiesis, acting upstream of tal1/scl. In Xenopus laevis (African clawed frog), this protein is Nucleosome assembly protein 1-like 1-A (nap1l1-a).